Consider the following 369-residue polypeptide: 2-aminoethylphosphonate--pyruvate transaminase (369 aa).

Residue K193 is modified to N6-(pyridoxal phosphate)lysine.

It belongs to the class-V pyridoxal-phosphate-dependent aminotransferase family. PhnW subfamily. In terms of assembly, homodimer. Pyridoxal 5'-phosphate is required as a cofactor.

It catalyses the reaction (2-aminoethyl)phosphonate + pyruvate = phosphonoacetaldehyde + L-alanine. Involved in phosphonate degradation. The sequence is that of 2-aminoethylphosphonate--pyruvate transaminase from Burkholderia pseudomallei (strain 1106a).